Consider the following 255-residue polypeptide: 3-deoxy-manno-octulosonate cytidylyltransferase (255 aa).

The protein belongs to the KdsB family.

The protein resides in the cytoplasm. The enzyme catalyses 3-deoxy-alpha-D-manno-oct-2-ulosonate + CTP = CMP-3-deoxy-beta-D-manno-octulosonate + diphosphate. The protein operates within nucleotide-sugar biosynthesis; CMP-3-deoxy-D-manno-octulosonate biosynthesis; CMP-3-deoxy-D-manno-octulosonate from 3-deoxy-D-manno-octulosonate and CTP: step 1/1. Its pathway is bacterial outer membrane biogenesis; lipopolysaccharide biosynthesis. Functionally, activates KDO (a required 8-carbon sugar) for incorporation into bacterial lipopolysaccharide in Gram-negative bacteria. In Pelobacter propionicus (strain DSM 2379 / NBRC 103807 / OttBd1), this protein is 3-deoxy-manno-octulosonate cytidylyltransferase.